The primary structure comprises 1364 residues: Toxin subunit YenA2 (1364 aa).

A coiled-coil region spans residues 1025–1080 (SESYRRRRQEWELQYKQAEWEVNSVEQQINLQNMQIKAANKRLEQVEAQQQQAMAL).

As to quaternary structure, semipurified toxin complex consists of at least YenA1-YenA2-YenB-YenC1-YenC2-Chi1-Chi2. The Yen-TC:K9 subcomplex is about 26 nm tall and 22 nm in diameter with 5-fold symmetry and 5 copies of YenA1, YenA2, Chi1 and Chi2; the chitinase subunits may be solvent accessible on the exterior the complex. The Yen-TC:K9 subcomplex has no insecticidal activity. The native complex with additional YenB, YenC1 and YenC2 subunits is 16 nm taller and is insecticidal; the toxicity-conferring subunits are present at about 1 copy each. In terms of processing, the isolated toxin complex includes 3 peptides starting between residues 768 and 778 of this protein, which might be physiologically relevant.

It localises to the secreted. In terms of biological role, part of an orally active toxin complex (TC) with strong insecticidal effects on larvae of the Coleoptera Costelytra zealandica, Acrossidius tasmania and Adoryphorus couloni and some Lepidoptera larvae. The TC has an endochitinase activity. This Yersinia entomophaga protein is Toxin subunit YenA2.